We begin with the raw amino-acid sequence, 164 residues long: Putative 4-hydroxy-4-methyl-2-oxoglutarate aldolase (164 aa).

Substrate contacts are provided by residues 80 to 83 (GGNL) and Arg-102. A divalent metal cation is bound at residue Asp-103.

It belongs to the class II aldolase/RraA-like family. Homotrimer. A divalent metal cation serves as cofactor.

It catalyses the reaction 4-hydroxy-4-methyl-2-oxoglutarate = 2 pyruvate. The enzyme catalyses oxaloacetate + H(+) = pyruvate + CO2. Functionally, catalyzes the aldol cleavage of 4-hydroxy-4-methyl-2-oxoglutarate (HMG) into 2 molecules of pyruvate. Also contains a secondary oxaloacetate (OAA) decarboxylase activity due to the common pyruvate enolate transition state formed following C-C bond cleavage in the retro-aldol and decarboxylation reactions. This is Putative 4-hydroxy-4-methyl-2-oxoglutarate aldolase from Paraburkholderia phytofirmans (strain DSM 17436 / LMG 22146 / PsJN) (Burkholderia phytofirmans).